The chain runs to 134 residues: Outer membrane lipoprotein RcsF (134 aa).

An N-terminal signal peptide occupies residues 1-15; sequence MRALPICLVALMLSG. A lipid anchor (N-palmitoyl cysteine) is attached at C16. Residue C16 is the site of S-diacylglycerol cysteine attachment. Disordered regions lie at residues 22–48 and 67–88; these read SPVE…RATP and GEVS…IPTA. A compositionally biased stretch (polar residues) spans 72–82; sequence DSCQASNQDSP. 2 disulfide bridges follow: C74–C118 and C109–C124.

The protein belongs to the RcsF family.

It is found in the cell outer membrane. Essential component of the Rcs signaling system, which controls transcription of numerous genes. Plays a role in signal transduction from the cell surface to the histidine kinase RcsC. May detect outer membrane defects. The polypeptide is Outer membrane lipoprotein RcsF (Escherichia coli O6:H1 (strain CFT073 / ATCC 700928 / UPEC)).